The sequence spans 199 residues: Recombination protein RecR (199 aa).

The segment at 57–72 adopts a C4-type zinc-finger fold; sequence CQSCRTYTEETLCPIC. Residues 81-176 form the Toprim domain; sequence STICVVETPA…MISRIAHGVP (96 aa).

The protein belongs to the RecR family.

In terms of biological role, may play a role in DNA repair. It seems to be involved in an RecBC-independent recombinational process of DNA repair. It may act with RecF and RecO. In Shewanella baltica (strain OS155 / ATCC BAA-1091), this protein is Recombination protein RecR.